A 215-amino-acid polypeptide reads, in one-letter code: Octanoyltransferase (215 aa).

Positions Pro-33–Thr-209 constitute a BPL/LPL catalytic domain. Substrate-binding positions include Arg-72–His-79, Ser-139–Gly-141, and Gly-152–Ala-154. Residue Cys-170 is the Acyl-thioester intermediate of the active site.

This sequence belongs to the LipB family.

It is found in the cytoplasm. It carries out the reaction octanoyl-[ACP] + L-lysyl-[protein] = N(6)-octanoyl-L-lysyl-[protein] + holo-[ACP] + H(+). It participates in protein modification; protein lipoylation via endogenous pathway; protein N(6)-(lipoyl)lysine from octanoyl-[acyl-carrier-protein]: step 1/2. Catalyzes the transfer of endogenously produced octanoic acid from octanoyl-acyl-carrier-protein onto the lipoyl domains of lipoate-dependent enzymes. Lipoyl-ACP can also act as a substrate although octanoyl-ACP is likely to be the physiological substrate. This Cellvibrio japonicus (strain Ueda107) (Pseudomonas fluorescens subsp. cellulosa) protein is Octanoyltransferase.